Reading from the N-terminus, the 335-residue chain is Holliday junction branch migration complex subunit RuvB (335 aa).

Residues 1 to 183 form a large ATPase domain (RuvB-L) region; the sequence is MDERIISSET…FGVIDHLEFY (183 aa). ATP contacts are provided by residues leucine 22, arginine 23, glycine 64, lysine 67, threonine 68, threonine 69, 130-132, arginine 173, tyrosine 183, and arginine 220; that span reads EDY. Threonine 68 contacts Mg(2+). A small ATPAse domain (RuvB-S) region spans residues 184-254; that stretch reads TEEQLTEIVL…LAKEALTLLQ (71 aa). Residues 257 to 335 form a head domain (RuvB-H) region; sequence PRGLDTIDQK…HLGISYEKEV (79 aa). Arginine 293, arginine 312, and arginine 317 together coordinate DNA.

This sequence belongs to the RuvB family. Homohexamer. Forms an RuvA(8)-RuvB(12)-Holliday junction (HJ) complex. HJ DNA is sandwiched between 2 RuvA tetramers; dsDNA enters through RuvA and exits via RuvB. An RuvB hexamer assembles on each DNA strand where it exits the tetramer. Each RuvB hexamer is contacted by two RuvA subunits (via domain III) on 2 adjacent RuvB subunits; this complex drives branch migration. In the full resolvosome a probable DNA-RuvA(4)-RuvB(12)-RuvC(2) complex forms which resolves the HJ.

The protein localises to the cytoplasm. It catalyses the reaction ATP + H2O = ADP + phosphate + H(+). In terms of biological role, the RuvA-RuvB-RuvC complex processes Holliday junction (HJ) DNA during genetic recombination and DNA repair, while the RuvA-RuvB complex plays an important role in the rescue of blocked DNA replication forks via replication fork reversal (RFR). RuvA specifically binds to HJ cruciform DNA, conferring on it an open structure. The RuvB hexamer acts as an ATP-dependent pump, pulling dsDNA into and through the RuvAB complex. RuvB forms 2 homohexamers on either side of HJ DNA bound by 1 or 2 RuvA tetramers; 4 subunits per hexamer contact DNA at a time. Coordinated motions by a converter formed by DNA-disengaged RuvB subunits stimulates ATP hydrolysis and nucleotide exchange. Immobilization of the converter enables RuvB to convert the ATP-contained energy into a lever motion, pulling 2 nucleotides of DNA out of the RuvA tetramer per ATP hydrolyzed, thus driving DNA branch migration. The RuvB motors rotate together with the DNA substrate, which together with the progressing nucleotide cycle form the mechanistic basis for DNA recombination by continuous HJ branch migration. Branch migration allows RuvC to scan DNA until it finds its consensus sequence, where it cleaves and resolves cruciform DNA. This chain is Holliday junction branch migration complex subunit RuvB, found in Listeria innocua serovar 6a (strain ATCC BAA-680 / CLIP 11262).